The sequence spans 336 residues: Anthranilate phosphoribosyltransferase (336 aa).

Residues glycine 79, 82 to 83 (GD), threonine 87, 89 to 92 (NIST), 107 to 115 (KHGNRSVSS), and serine 119 each bind 5-phospho-alpha-D-ribose 1-diphosphate. Glycine 79 lines the anthranilate pocket. A Mg(2+)-binding site is contributed by serine 91. Asparagine 110 serves as a coordination point for anthranilate. Residue arginine 165 participates in anthranilate binding. Mg(2+)-binding residues include aspartate 224 and glutamate 225.

Belongs to the anthranilate phosphoribosyltransferase family. In terms of assembly, homodimer. It depends on Mg(2+) as a cofactor.

The enzyme catalyses N-(5-phospho-beta-D-ribosyl)anthranilate + diphosphate = 5-phospho-alpha-D-ribose 1-diphosphate + anthranilate. It participates in amino-acid biosynthesis; L-tryptophan biosynthesis; L-tryptophan from chorismate: step 2/5. Functionally, catalyzes the transfer of the phosphoribosyl group of 5-phosphorylribose-1-pyrophosphate (PRPP) to anthranilate to yield N-(5'-phosphoribosyl)-anthranilate (PRA). The chain is Anthranilate phosphoribosyltransferase from Endomicrobium trichonymphae.